Here is a 245-residue protein sequence, read N- to C-terminus: DNA polymerase sliding clamp 2 (245 aa).

It belongs to the PCNA family. Homotrimer. The subunits circularize to form a toroid; DNA passes through its center. Replication factor C (RFC) is required to load the toroid on the DNA.

Sliding clamp subunit that acts as a moving platform for DNA processing. Responsible for tethering the catalytic subunit of DNA polymerase and other proteins to DNA during high-speed replication. This is DNA polymerase sliding clamp 2 from Sulfolobus acidocaldarius (strain ATCC 33909 / DSM 639 / JCM 8929 / NBRC 15157 / NCIMB 11770).